The chain runs to 254 residues: Probable protein S-acyltransferase 15 (254 aa).

Transmembrane regions (helical) follow at residues 1–21 and 28–48; these read MGFV…GLQS and ALLF…CVLV. The 51-residue stretch at 75 to 125 folds into the DHHC domain; it reads RKCDKCFAYKPLRTHHCRVCRRCVLKMDHHCLWINNCVGYANYKAFFILVF. Cysteine 105 (S-palmitoyl cysteine intermediate) is an active-site residue. The next 2 helical transmembrane spans lie at 119–139 and 164–184; these read AFFI…VLLV and IFMI…IYLI.

This sequence belongs to the DHHC palmitoyltransferase family.

It is found in the endoplasmic reticulum membrane. The protein localises to the cytoplasmic vesicle membrane. The enzyme catalyses L-cysteinyl-[protein] + hexadecanoyl-CoA = S-hexadecanoyl-L-cysteinyl-[protein] + CoA. Its function is as follows. Palmitoyl acyltransferase. This is Probable protein S-acyltransferase 15 (PAT15) from Arabidopsis thaliana (Mouse-ear cress).